A 103-amino-acid chain; its full sequence is Small ribosomal subunit protein bS18c (103 aa).

This sequence belongs to the bacterial ribosomal protein bS18 family. As to quaternary structure, part of the 30S ribosomal subunit.

It is found in the plastid. The protein resides in the chloroplast. The polypeptide is Small ribosomal subunit protein bS18c (Buxus microphylla (Littleleaf boxwood)).